The primary structure comprises 158 residues: 2-C-methyl-D-erythritol 2,4-cyclodiphosphate synthase (158 aa).

A divalent metal cation-binding residues include aspartate 9 and histidine 11. Residues 9-11 and 35-36 contribute to the 4-CDP-2-C-methyl-D-erythritol 2-phosphate site; these read DVH and HS. Histidine 43 lines the a divalent metal cation pocket. Residues 57 to 59, 62 to 66, 101 to 107, 133 to 136, phenylalanine 140, and arginine 143 contribute to the 4-CDP-2-C-methyl-D-erythritol 2-phosphate site; these read DIG, FPDTD, AQKPKMA, and TTTE.

The protein belongs to the IspF family. Homotrimer. A divalent metal cation serves as cofactor.

The enzyme catalyses 4-CDP-2-C-methyl-D-erythritol 2-phosphate = 2-C-methyl-D-erythritol 2,4-cyclic diphosphate + CMP. The protein operates within isoprenoid biosynthesis; isopentenyl diphosphate biosynthesis via DXP pathway; isopentenyl diphosphate from 1-deoxy-D-xylulose 5-phosphate: step 4/6. Its function is as follows. Involved in the biosynthesis of isopentenyl diphosphate (IPP) and dimethylallyl diphosphate (DMAPP), two major building blocks of isoprenoid compounds. Catalyzes the conversion of 4-diphosphocytidyl-2-C-methyl-D-erythritol 2-phosphate (CDP-ME2P) to 2-C-methyl-D-erythritol 2,4-cyclodiphosphate (ME-CPP) with a corresponding release of cytidine 5-monophosphate (CMP). In Bacillus thuringiensis subsp. konkukian (strain 97-27), this protein is 2-C-methyl-D-erythritol 2,4-cyclodiphosphate synthase.